The chain runs to 238 residues: Small ribosomal subunit protein eS4 (238 aa).

An S4 RNA-binding domain is found at 38–100 (LPLAIVIRDV…TGEVYRVVPD (63 aa)).

The protein belongs to the eukaryotic ribosomal protein eS4 family.

The polypeptide is Small ribosomal subunit protein eS4 (Pyrobaculum arsenaticum (strain DSM 13514 / JCM 11321 / PZ6)).